An 865-amino-acid chain; its full sequence is Protein translocase subunit SecA (865 aa).

ATP-binding positions include Gln93, 111 to 115, and Asp501; that span reads GEGKT. Zn(2+) is bound by residues Cys841, Cys843, Cys852, and Cys853.

It belongs to the SecA family. As to quaternary structure, monomer and homodimer. Part of the essential Sec protein translocation apparatus which comprises SecA, SecYEG and auxiliary proteins SecDF-YajC and YidC. Zn(2+) serves as cofactor.

Its subcellular location is the cell inner membrane. It localises to the cytoplasm. The enzyme catalyses ATP + H2O + cellular proteinSide 1 = ADP + phosphate + cellular proteinSide 2.. In terms of biological role, part of the Sec protein translocase complex. Interacts with the SecYEG preprotein conducting channel. Has a central role in coupling the hydrolysis of ATP to the transfer of proteins into and across the cell membrane, serving as an ATP-driven molecular motor driving the stepwise translocation of polypeptide chains across the membrane. The protein is Protein translocase subunit SecA of Helicobacter pylori (strain ATCC 700392 / 26695) (Campylobacter pylori).